The primary structure comprises 117 residues: MELGLSWVFLVAILEGVQCEVQLVESGGGLVQPGGSLRLSCAASGFTFSSYWMSWVRQAPGKGLEWVANIKQDGSEKYYVDSVKGRFTISRDNAKNSLYLQMNSLRAEDTAVYYCAR.

The signal sequence occupies residues 1-19 (MELGLSWVFLVAILEGVQC). A framework-1 region spans residues 20-44 (EVQLVESGGGLVQPGGSLRLSCAAS). The Ig-like domain occupies 20–117 (EVQLVESGGG…EDTAVYYCAR (98 aa)). The cysteines at positions 41 and 115 are disulfide-linked. Residues 45–52 (GFTFSSYW) form a complementarity-determining-1 region. The tract at residues 53-69 (MSWVRQAPGKGLEWVAN) is framework-2. Residues 70-77 (IKQDGSEK) form a complementarity-determining-2 region. Positions 78–115 (YYVDSVKGRFTISRDNAKNSLYLQMNSLRAEDTAVYYC) are framework-3. The segment at 116-117 (AR) is complementarity-determining-3.

As to quaternary structure, immunoglobulins are composed of two identical heavy chains and two identical light chains; disulfide-linked.

The protein resides in the secreted. Its subcellular location is the cell membrane. Its function is as follows. V region of the variable domain of immunoglobulin heavy chains that participates in the antigen recognition. Immunoglobulins, also known as antibodies, are membrane-bound or secreted glycoproteins produced by B lymphocytes. In the recognition phase of humoral immunity, the membrane-bound immunoglobulins serve as receptors which, upon binding of a specific antigen, trigger the clonal expansion and differentiation of B lymphocytes into immunoglobulins-secreting plasma cells. Secreted immunoglobulins mediate the effector phase of humoral immunity, which results in the elimination of bound antigens. The antigen binding site is formed by the variable domain of one heavy chain, together with that of its associated light chain. Thus, each immunoglobulin has two antigen binding sites with remarkable affinity for a particular antigen. The variable domains are assembled by a process called V-(D)-J rearrangement and can then be subjected to somatic hypermutations which, after exposure to antigen and selection, allow affinity maturation for a particular antigen. The sequence is that of Immunoglobulin heavy variable 3-7 from Homo sapiens (Human).